The chain runs to 151 residues: D-aminoacyl-tRNA deacylase (151 aa).

The short motif at 137–138 (GP) is the Gly-cisPro motif, important for rejection of L-amino acids element.

It belongs to the DTD family. Homodimer.

It is found in the cytoplasm. The enzyme catalyses glycyl-tRNA(Ala) + H2O = tRNA(Ala) + glycine + H(+). It carries out the reaction a D-aminoacyl-tRNA + H2O = a tRNA + a D-alpha-amino acid + H(+). An aminoacyl-tRNA editing enzyme that deacylates mischarged D-aminoacyl-tRNAs. Also deacylates mischarged glycyl-tRNA(Ala), protecting cells against glycine mischarging by AlaRS. Acts via tRNA-based rather than protein-based catalysis; rejects L-amino acids rather than detecting D-amino acids in the active site. By recycling D-aminoacyl-tRNA to D-amino acids and free tRNA molecules, this enzyme counteracts the toxicity associated with the formation of D-aminoacyl-tRNA entities in vivo and helps enforce protein L-homochirality. The chain is D-aminoacyl-tRNA deacylase from Geobacter metallireducens (strain ATCC 53774 / DSM 7210 / GS-15).